A 505-amino-acid chain; its full sequence is GDP-Man:Man(3)GlcNAc(2)-PP-Dol alpha-1,2-mannosyltransferase (505 aa).

Residues 1-3 (MDE) lie on the Lumenal side of the membrane. A helical membrane pass occupies residues 4–24 (LIMMVFVLFTIVLLLTVSMTL). The Cytoplasmic portion of the chain corresponds to 25–145 (AALISTIVVL…KWVEASTYPR (121 aa)). The segment at residues 146 to 166 (FTLIGQSLGSMILGWEALTKF) is an intramembrane region (helical). Residues 167–402 (VPTIFLDSMG…VGIHTMYNEH (236 aa)) lie on the Cytoplasmic side of the membrane. The helical intramembrane region spans 403–423 (FGIGVVELMAAGVIPVANNSA). Residues 424–505 (GPKEDIVRHE…NNNSSSKKRN (82 aa)) lie on the Cytoplasmic side of the membrane.

It belongs to the glycosyltransferase group 1 family.

It is found in the endoplasmic reticulum membrane. The catalysed reaction is an alpha-D-Man-(1-&gt;3)-[alpha-D-Man-(1-&gt;6)]-beta-D-Man-(1-&gt;4)-beta-D-GlcNAc-(1-&gt;4)-alpha-D-GlcNAc-diphospho-di-trans,poly-cis-dolichol + 2 GDP-alpha-D-mannose = an alpha-D-Man-(1-&gt;2)-alpha-D-Man-(1-&gt;2)-alpha-D-Man-(1-&gt;3)-[alpha-D-Man-(1-&gt;6)]-beta-D-Man-(1-&gt;4)-beta-D-GlcNAc-(1-&gt;4)-alpha-D-GlcNAc-diphospho-di-trans,poly-cis-dolichol + 2 GDP + 2 H(+). The protein operates within protein modification; protein glycosylation. Its function is as follows. GDP-Man:Man(3)GlcNAc(2)-PP-Dol alpha-1,2-mannosyltransferase that operates in the biosynthetic pathway of dolichol-linked oligosaccharides, the glycan precursors employed in protein asparagine (N)-glycosylation. The assembly of dolichol-linked oligosaccharides begins on the cytosolic side of the endoplasmic reticulum membrane and finishes in its lumen. The sequential addition of sugars to dolichol pyrophosphate produces dolichol-linked oligosaccharides containing fourteen sugars, including two GlcNAcs, nine mannoses and three glucoses. Once assembled, the oligosaccharide is transferred from the lipid to nascent proteins by oligosaccharyltransferases. Catalyzes, on the cytoplasmic face of the endoplasmic reticulum, the addition of the fourth and fifth mannose residues to the dolichol-linked oligosaccharide chain, to produce Man(5)GlcNAc(2)-PP-dolichol core oligosaccharide. This chain is GDP-Man:Man(3)GlcNAc(2)-PP-Dol alpha-1,2-mannosyltransferase (alg11), found in Dictyostelium discoideum (Social amoeba).